The primary structure comprises 469 residues: 23S rRNA (uracil(1939)-C(5))-methyltransferase RlmD (469 aa).

Residues 11-69 enclose the TRAM domain; sequence PKTSNQRLTVTVDKLDMNGVGVARWQNKPIFIAGVLPDEIVDVKVIEQKSKYARAKLIS. Positions 82, 88, 91, and 178 each coordinate [4Fe-4S] cluster. Positions 300, 329, 334, 350, 377, and 399 each coordinate S-adenosyl-L-methionine. The Nucleophile role is filled by C425.

This sequence belongs to the class I-like SAM-binding methyltransferase superfamily. RNA M5U methyltransferase family. RlmD subfamily.

It carries out the reaction uridine(1939) in 23S rRNA + S-adenosyl-L-methionine = 5-methyluridine(1939) in 23S rRNA + S-adenosyl-L-homocysteine + H(+). Functionally, catalyzes the formation of 5-methyl-uridine at position 1939 (m5U1939) in 23S rRNA. In Colwellia psychrerythraea (strain 34H / ATCC BAA-681) (Vibrio psychroerythus), this protein is 23S rRNA (uracil(1939)-C(5))-methyltransferase RlmD.